Consider the following 569-residue polypeptide: MAQRILTLILLLCSTSAFAGLFDAPGRSQFVPADQAFSFDFQQNQHDLNLSWQVKDGYYLYRKQISITPSQAEIAEVRLPAGVWHEDEFYGKSEIYRKRLNIPLIVNQAASGATLTVTYQGCADAGFCYPPETKTVPLSEVSASTVAKSTPSPVAAQTEETPQPAARLPFSALWALLIGIGIAFTPCVLPMYPLISGIVLGGKQRLSTGRALLLTFIYVQGMALTYTALGLVVAAAGLQFQAALQHPYVLIGLALVFTLLALSMFGLFTLQLPSSLQTRLTLMSNRQQGGSPGGVFVMGAIAGLICSPCTTAPLSAILLYIAQSGNMWLGGGTLYLYALGMGLPLILITVFGNRLLPKSGPWMEHVKTAFGFVILALPVFLLERVIGDEWGLRLWSLLGVAFFGWAFITSLHARRSGMRIVQIILLAAALVSVRPLQDWAFGATTAQTQAHLNFKPITTVDALNQALAEAKGKPIMLDLYADWCVACKEFEKYTFSDPQVQQTLGDTVLLQANVTANNAQDVALLRHLNVLGLPTILFFDAQGHEHPNARVTGFMDATTFSAHLRDRQP.

The first 19 residues, 1–19 (MAQRILTLILLLCSTSAFA), serve as a signal peptide directing secretion. Intrachain disulfides connect cysteine 122/cysteine 128 and cysteine 187/cysteine 309. The next 7 helical transmembrane spans lie at 168–188 (LPFSALWALLIGIGIAFTPCV), 213–233 (LLTFIYVQGMALTYTALGLVV), 248–268 (YVLIGLALVFTLLALSMFGLF), 301–321 (IAGLICSPCTTAPLSAILLYI), 328–348 (WLGGGTLYLYALGMGLPLILI), 362–382 (WMEHVKTAFGFVILALPVFLL), and 391–411 (GLRLWSLLGVAFFGWAFITSL). The region spanning 430-569 (LVSVRPLQDW…FSAHLRDRQP (140 aa)) is the Thioredoxin domain. Cysteine 484 and cysteine 487 are disulfide-bonded.

The protein belongs to the thioredoxin family. DsbD subfamily.

It localises to the cell inner membrane. It carries out the reaction [protein]-dithiol + NAD(+) = [protein]-disulfide + NADH + H(+). The enzyme catalyses [protein]-dithiol + NADP(+) = [protein]-disulfide + NADPH + H(+). Required to facilitate the formation of correct disulfide bonds in some periplasmic proteins and for the assembly of the periplasmic c-type cytochromes. Acts by transferring electrons from cytoplasmic thioredoxin to the periplasm. This transfer involves a cascade of disulfide bond formation and reduction steps. This chain is Thiol:disulfide interchange protein DsbD, found in Citrobacter koseri (strain ATCC BAA-895 / CDC 4225-83 / SGSC4696).